The sequence spans 540 residues: MNNKDLKTKFIFITGGVVSSLGKGITAASIGQILKNRGLKVSIQKLDPYINIDPGTMSPYQHGEVFVTDDGAETDLDLGHYERFLDENMSKKSNVTAGQIYQSVINKEREGKYLGKTVQVIPHITEEIKQKLIDVALFHKSDVVIVEIGGTVGDIESSPFLEAIRQVRFDFGYHNVLYLHTTLVPYLKKAQEIKTKPTQHSVKELRALGIQPQILVLRSEVPINPETKNKIAALCDINPQAIFEALDVDILYQMILNLHHQGIDDFILQHFKLTNFSNADLQSWKQLITRIQNLEKKVVIALVGKYIVLHDAYLSIIEALKHASYQYNCKLEIKWIDAEKVTPDNISSLLEDYDGILVPYGFGNRAIEGKILAINYARTNNIPFFGICLGMQLAVIEYARNVLHLQGANSLEVDEKTPHPVITKKIVDSNLGGTLRLGSYPCHLKANTKSKAIYNQEIIYERHRHRFEMNPHYVALFEKNNDFVVSGINQEQKLCEIVELKSHPWFIAVQFHPEFLSRPLKPHPLFKGFVEASLLNQKNK.

The segment at 1-273 (MNNKDLKTKF…DDFILQHFKL (273 aa)) is amidoligase domain. Ser19 serves as a coordination point for CTP. Residue Ser19 participates in UTP binding. 20-25 (SLGKGI) provides a ligand contact to ATP. Tyr60 contributes to the L-glutamine binding site. Asp77 contributes to the ATP binding site. Residues Asp77 and Glu147 each contribute to the Mg(2+) site. CTP-binding positions include 154–156 (DIE), 194–199 (KTKPTQ), and Lys230. Residues 194–199 (KTKPTQ) and Lys230 each bind UTP. The 234-residue stretch at 306-539 (YIVLHDAYLS…VEASLLNQKN (234 aa)) folds into the Glutamine amidotransferase type-1 domain. Gly361 is an L-glutamine binding site. The active-site Nucleophile; for glutamine hydrolysis is Cys388. Residues 389-392 (LGMQ), Glu412, and Arg466 each bind L-glutamine. Residues His512 and Glu514 contribute to the active site.

Belongs to the CTP synthase family. In terms of assembly, homotetramer.

The enzyme catalyses UTP + L-glutamine + ATP + H2O = CTP + L-glutamate + ADP + phosphate + 2 H(+). It carries out the reaction L-glutamine + H2O = L-glutamate + NH4(+). It catalyses the reaction UTP + NH4(+) + ATP = CTP + ADP + phosphate + 2 H(+). It participates in pyrimidine metabolism; CTP biosynthesis via de novo pathway; CTP from UDP: step 2/2. Allosterically activated by GTP, when glutamine is the substrate; GTP has no effect on the reaction when ammonia is the substrate. The allosteric effector GTP functions by stabilizing the protein conformation that binds the tetrahedral intermediate(s) formed during glutamine hydrolysis. Inhibited by the product CTP, via allosteric rather than competitive inhibition. Functionally, catalyzes the ATP-dependent amination of UTP to CTP with either L-glutamine or ammonia as the source of nitrogen. Regulates intracellular CTP levels through interactions with the four ribonucleotide triphosphates. The protein is CTP synthase of Onion yellows phytoplasma (strain OY-M).